A 165-amino-acid chain; its full sequence is Large ribosomal subunit protein uL10 (165 aa).

The protein belongs to the universal ribosomal protein uL10 family. In terms of assembly, part of the ribosomal stalk of the 50S ribosomal subunit. The N-terminus interacts with L11 and the large rRNA to form the base of the stalk. The C-terminus forms an elongated spine to which L12 dimers bind in a sequential fashion forming a multimeric L10(L12)X complex.

Functionally, forms part of the ribosomal stalk, playing a central role in the interaction of the ribosome with GTP-bound translation factors. The protein is Large ribosomal subunit protein uL10 of Cronobacter sakazakii (strain ATCC BAA-894) (Enterobacter sakazakii).